A 235-amino-acid polypeptide reads, in one-letter code: Sugar fermentation stimulation protein homolog (235 aa).

The protein belongs to the SfsA family.

In Roseobacter denitrificans (strain ATCC 33942 / OCh 114) (Erythrobacter sp. (strain OCh 114)), this protein is Sugar fermentation stimulation protein homolog.